The chain runs to 202 residues: Peptide deformylase 2 (202 aa).

Positions 123 and 165 each coordinate Fe cation. Glutamate 166 is a catalytic residue. Histidine 169 contacts Fe cation.

This sequence belongs to the polypeptide deformylase family. It depends on Fe(2+) as a cofactor.

The enzyme catalyses N-terminal N-formyl-L-methionyl-[peptide] + H2O = N-terminal L-methionyl-[peptide] + formate. Functionally, removes the formyl group from the N-terminal Met of newly synthesized proteins. Requires at least a dipeptide for an efficient rate of reaction. N-terminal L-methionine is a prerequisite for activity but the enzyme has broad specificity at other positions. This chain is Peptide deformylase 2, found in Vibrio vulnificus (strain YJ016).